A 236-amino-acid chain; its full sequence is Phosphoribosylaminoimidazole-succinocarboxamide synthase (236 aa).

It belongs to the SAICAR synthetase family.

The enzyme catalyses 5-amino-1-(5-phospho-D-ribosyl)imidazole-4-carboxylate + L-aspartate + ATP = (2S)-2-[5-amino-1-(5-phospho-beta-D-ribosyl)imidazole-4-carboxamido]succinate + ADP + phosphate + 2 H(+). The protein operates within purine metabolism; IMP biosynthesis via de novo pathway; 5-amino-1-(5-phospho-D-ribosyl)imidazole-4-carboxamide from 5-amino-1-(5-phospho-D-ribosyl)imidazole-4-carboxylate: step 1/2. This Campylobacter curvus (strain 525.92) protein is Phosphoribosylaminoimidazole-succinocarboxamide synthase.